A 528-amino-acid polypeptide reads, in one-letter code: Chromosomal replication initiator protein DnaA (528 aa).

The tract at residues 1 to 104 (MNDDPNALAR…PVDDEPESDP (104 aa)) is domain I, interacts with DnaA modulators. The tract at residues 95-158 (PVDDEPESDP…TDFEEVDDDR (64 aa)) is disordered. The segment covering 104 to 123 (PPSRDHRPEPEPLHTPRHLE) has biased composition (basic and acidic residues). The domain II stretch occupies residues 105–187 (PSRDHRPEPE…GPAPSATGGN (83 aa)). Residues 149–158 (TDFEEVDDDR) are compositionally biased toward acidic residues. The tract at residues 188–404 (SLNAKYTFDT…GALIRVTAFA (217 aa)) is domain III, AAA+ region. ATP is bound by residues Gly232, Gly234, Lys235, and Thr236. The tract at residues 405–528 (SLNRQPLDLT…TARIKQRSKR (124 aa)) is domain IV, binds dsDNA.

Belongs to the DnaA family. In terms of assembly, oligomerizes as a right-handed, spiral filament on DNA at oriC.

Its subcellular location is the cytoplasm. Its function is as follows. Plays an essential role in the initiation and regulation of chromosomal replication. ATP-DnaA binds to the origin of replication (oriC) to initiate formation of the DNA replication initiation complex once per cell cycle. Binds the DnaA box (a 9 base pair repeat at the origin) and separates the double-stranded (ds)DNA. Forms a right-handed helical filament on oriC DNA; dsDNA binds to the exterior of the filament while single-stranded (ss)DNA is stabiized in the filament's interior. The ATP-DnaA-oriC complex binds and stabilizes one strand of the AT-rich DNA unwinding element (DUE), permitting loading of DNA polymerase. After initiation quickly degrades to an ADP-DnaA complex that is not apt for DNA replication. Binds acidic phospholipids. The sequence is that of Chromosomal replication initiator protein DnaA from Rhodococcus jostii (strain RHA1).